The sequence spans 311 residues: Protein lifeguard 3 (311 aa).

Disordered regions lie at residues 1–37 (MSNP…GGYP) and 50–72 (PAGY…PGHG). The span at 53 to 62 (YPQPMPPTHP) shows a compositional bias: pro residues. Phosphoserine occurs at positions 81 and 83. 7 helical membrane passes run 110-130 (LLIT…SAFV), 134-154 (VAVY…LACC), 165-185 (IILL…ISSM), 190-210 (AVII…IFCF), 221-241 (GLFC…SIVL), 246-266 (VYWL…LFLA), and 286-306 (ITGA…VLQL).

It belongs to the BI1 family. LFG subfamily.

It localises to the membrane. Its subcellular location is the lysosome membrane. The protein localises to the endosome membrane. Functionally, negatively regulates aortic matrix metalloproteinase-9 (MMP9) production and may play a protective role in vascular remodeling. The sequence is that of Protein lifeguard 3 (TMBIM1) from Homo sapiens (Human).